The following is a 504-amino-acid chain: Amphoterin-induced protein 3 (504 aa).

The N-terminal stretch at 1–19 is a signal peptide; it reads MTWLVLLGTLLCMLRVGLG. Topologically, residues 20–383 are extracellular; it reads TPDSEGFPPR…PRPEPEAFNT (364 aa). The LRRNT domain maps to 25 to 61; it reads GFPPRALHNCPYKCICAADLLSCTGLGLQDVPAELPA. Cystine bridges form between cysteine 34/cysteine 40 and cysteine 38/cysteine 47. 6 LRR repeats span residues 62–83, 86–107, 110–133, 134–155, 158–178, and 184–207; these read ATADLDLSHNALQRLRPGWLAP, QLRALHLDHNELDALGRGVFVN, GLRLLDLSSNTLRALGRHDLDGLG, ALEKLLLFNNRLVHLDEHAFHG, ALSHLYLGCNELASFSFDHLH, and HLLTLDLSSNRLGHISVPELAALP. Asparagine 107 is a glycosylation site (N-linked (GlcNAc...) asparagine). One can recognise an LRRCT domain in the interval 219–275; that stretch reads NPLPCDCRLYHLLQRWHQRGLSAVRDFAREYVCLAFKVPASRVRFFQHSRVFENCSS. Cystine bridges form between cysteine 223–cysteine 251, cysteine 225–cysteine 273, and cysteine 300–cysteine 352. N-linked (GlcNAc...) asparagine glycosylation is found at asparagine 272, asparagine 301, asparagine 362, and asparagine 368. Residues 277-370 form the Ig-like C2-type domain; sequence PALGLERPEE…HNQTHEYNVS (94 aa). A helical membrane pass occupies residues 384-404; it reads GFTTLLGCAVGLVLVLLYLFA. Residues 405–504 lie on the Cytoplasmic side of the membrane; it reads PPCRCCRRAC…SIGSEGPMTT (100 aa). The disordered stretch occupies residues 422–448; sequence TPSPLQELSAQSSVLSTTPPDAPSRKA. The segment covering 424-440 has biased composition (polar residues); it reads SPLQELSAQSSVLSTTP.

The protein belongs to the immunoglobulin superfamily. AMIGO family. Binds AMIGO1 or AMIGO2.

It is found in the membrane. In terms of biological role, may mediate heterophilic cell-cell interaction. May contribute to signal transduction through its intracellular domain. The sequence is that of Amphoterin-induced protein 3 from Homo sapiens (Human).